A 114-amino-acid polypeptide reads, in one-letter code: Ribonuclease P protein component (114 aa).

The protein belongs to the RnpA family. In terms of assembly, consists of a catalytic RNA component (M1 or rnpB) and a protein subunit.

It carries out the reaction Endonucleolytic cleavage of RNA, removing 5'-extranucleotides from tRNA precursor.. Functionally, RNaseP catalyzes the removal of the 5'-leader sequence from pre-tRNA to produce the mature 5'-terminus. It can also cleave other RNA substrates such as 4.5S RNA. The protein component plays an auxiliary but essential role in vivo by binding to the 5'-leader sequence and broadening the substrate specificity of the ribozyme. This chain is Ribonuclease P protein component, found in Staphylococcus haemolyticus (strain JCSC1435).